A 380-amino-acid chain; its full sequence is Cytochrome b (380 aa).

Helical transmembrane passes span 34-54 (FGSL…LLAM), 78-99 (WLIR…FLHI), 114-134 (WNTG…GYVL), and 179-199 (FFAL…IHLT). Heme b contacts are provided by H84 and H98. Residues H183 and H197 each contribute to the heme b site. An a ubiquinone-binding site is contributed by H202. The next 4 helical transmembrane spans lie at 227 to 247 (IKDI…ALFS), 289 to 309 (LGGV…PFLH), 321 to 341 (LSQT…WIGS), and 348 to 368 (FIII…ILFP).

This sequence belongs to the cytochrome b family. The cytochrome bc1 complex contains 11 subunits: 3 respiratory subunits (MT-CYB, CYC1 and UQCRFS1), 2 core proteins (UQCRC1 and UQCRC2) and 6 low-molecular weight proteins (UQCRH/QCR6, UQCRB/QCR7, UQCRQ/QCR8, UQCR10/QCR9, UQCR11/QCR10 and a cleavage product of UQCRFS1). This cytochrome bc1 complex then forms a dimer. Heme b serves as cofactor.

It is found in the mitochondrion inner membrane. Component of the ubiquinol-cytochrome c reductase complex (complex III or cytochrome b-c1 complex) that is part of the mitochondrial respiratory chain. The b-c1 complex mediates electron transfer from ubiquinol to cytochrome c. Contributes to the generation of a proton gradient across the mitochondrial membrane that is then used for ATP synthesis. This Alectoris rufa (Red-legged partridge) protein is Cytochrome b (MT-CYB).